The following is a 349-amino-acid chain: uncharacterized protein (349 aa).

This is an uncharacterized protein from Archaeoglobus fulgidus (strain ATCC 49558 / DSM 4304 / JCM 9628 / NBRC 100126 / VC-16).